The following is a 268-amino-acid chain: Secreted RxLR effector protein 6 (268 aa).

Positions 1–19 are cleaved as a signal peptide; it reads MRGAFYIAIALLVVRSRTA. Residues 48 to 63 carry the RxLR-dEER motif; it reads RYLRDGLAHSAANEER. Positions 90–123 are disordered; the sequence is IGGHSHTPKSKRKVNLSPAKSQSGIRKKSTSINK. The span at 107–123 shows a compositional bias: polar residues; it reads PAKSQSGIRKKSTSINK.

This sequence belongs to the RxLR effector family.

The protein resides in the secreted. The protein localises to the host nucleus. It is found in the host cytoplasm. Secreted effector that completely suppresses the host cell death induced by cell death-inducing proteins. This Plasmopara viticola (Downy mildew of grapevine) protein is Secreted RxLR effector protein 6.